Consider the following 51-residue polypeptide: Large ribosomal subunit protein eL39 (51 aa).

The protein belongs to the eukaryotic ribosomal protein eL39 family.

The chain is Large ribosomal subunit protein eL39 from Methanococcus aeolicus (strain ATCC BAA-1280 / DSM 17508 / OCM 812 / Nankai-3).